The sequence spans 348 residues: Protein RecA (348 aa).

68–75 (GPESSGKT) contacts ATP.

It belongs to the RecA family.

Its subcellular location is the cytoplasm. In terms of biological role, can catalyze the hydrolysis of ATP in the presence of single-stranded DNA, the ATP-dependent uptake of single-stranded DNA by duplex DNA, and the ATP-dependent hybridization of homologous single-stranded DNAs. It interacts with LexA causing its activation and leading to its autocatalytic cleavage. The protein is Protein RecA of Rhodococcus opacus (strain B4).